A 300-amino-acid polypeptide reads, in one-letter code: Protein Bel-1 (300 aa).

Residues 1–50 (MDSYEKEESVASTSGIQDLQTLSELVGPENAGEGELTIAEEPEENPRRPR) are disordered. Polar residues predominate over residues 10 to 23 (VASTSGIQDLQTLS). Residues 89–200 (SKSLCKRLIL…SEGPKPRPRH (112 aa)) mediate DNA binding. Residues 209–244 (FEKHHKPRQKRPRRRSIDNESCASSSDTMANEPGSL) form a disordered region. The segment covering 211 to 222 (KHHKPRQKRPRR) has biased composition (basic residues). The Nuclear localization signal motif lies at 214–223 (KPRQKRPRRR). Residues 224–300 (SIDNESCASS…PSGSGEHSVL (77 aa)) are transactivation domain. Residues 227–237 (NESCASSSDTM) are compositionally biased toward polar residues.

In terms of assembly, homodimer or homomultimer. Forms complexes with the host nuclear factors NFIA, NFIB, NFIC or NFIX.

The protein resides in the host nucleus. In terms of biological role, transcriptional transactivator that activates the viral internal promoter (IP), thereby enhancing its own expression. This transactivation is repressed by nuclear factor I. Also transactivates the long terminal repeat (LTR) promoter, thereby inducing structural gene expression, initiating the late phase of infection. It is therefore a key regulator of viral gene expression. It directly binds to and activates DNA target sites of viral promoters and those of distinct cellular genes. Required for viral replication. This Human spumaretrovirus (SFVcpz(hu)) protein is Protein Bel-1 (bel1).